The primary structure comprises 392 residues: Phosphoglycerate kinase (392 aa).

Substrate contacts are provided by residues 21–23 (DFN), R36, 59–62 (HLGR), R118, and R151. ATP-binding positions include K202, E321, and 347–350 (GGDS).

The protein belongs to the phosphoglycerate kinase family. Monomer.

The protein localises to the cytoplasm. It carries out the reaction (2R)-3-phosphoglycerate + ATP = (2R)-3-phospho-glyceroyl phosphate + ADP. The protein operates within carbohydrate degradation; glycolysis; pyruvate from D-glyceraldehyde 3-phosphate: step 2/5. The polypeptide is Phosphoglycerate kinase (Symbiobacterium thermophilum (strain DSM 24528 / JCM 14929 / IAM 14863 / T)).